The sequence spans 340 residues: DNA-directed RNA polymerase subunit alpha (340 aa).

Positions 1–236 are alpha N-terminal domain (alpha-NTD); that stretch reads MLSLSKNWNT…EQLQLFISFE (236 aa). The alpha C-terminal domain (alpha-CTD) stretch occupies residues 251–340; the sequence is FAPYLLKRVD…LSKRYEDSYN (90 aa).

It belongs to the RNA polymerase alpha chain family. As to quaternary structure, homodimer. The RNAP catalytic core consists of 2 alpha, 1 beta, 1 beta' and 1 omega subunit. When a sigma factor is associated with the core the holoenzyme is formed, which can initiate transcription.

The enzyme catalyses RNA(n) + a ribonucleoside 5'-triphosphate = RNA(n+1) + diphosphate. Its function is as follows. DNA-dependent RNA polymerase catalyzes the transcription of DNA into RNA using the four ribonucleoside triphosphates as substrates. This Rickettsia peacockii (strain Rustic) protein is DNA-directed RNA polymerase subunit alpha.